The following is a 348-amino-acid chain: Anthranilate phosphoribosyltransferase (348 aa).

Residues Gly89, 92-93 (GD), Thr97, 99-102 (NIST), 117-125 (KHGNRSVSS), and Ser129 contribute to the 5-phospho-alpha-D-ribose 1-diphosphate site. Gly89 lines the anthranilate pocket. Ser101 lines the Mg(2+) pocket. Asn120 lines the anthranilate pocket. Arg175 is an anthranilate binding site. Mg(2+) contacts are provided by Asp233 and Glu234.

It belongs to the anthranilate phosphoribosyltransferase family. Homodimer. Mg(2+) serves as cofactor.

It catalyses the reaction N-(5-phospho-beta-D-ribosyl)anthranilate + diphosphate = 5-phospho-alpha-D-ribose 1-diphosphate + anthranilate. The protein operates within amino-acid biosynthesis; L-tryptophan biosynthesis; L-tryptophan from chorismate: step 2/5. Functionally, catalyzes the transfer of the phosphoribosyl group of 5-phosphorylribose-1-pyrophosphate (PRPP) to anthranilate to yield N-(5'-phosphoribosyl)-anthranilate (PRA). In Shewanella sp. (strain W3-18-1), this protein is Anthranilate phosphoribosyltransferase.